The following is a 505-amino-acid chain: Lysine--tRNA ligase (505 aa).

2 residues coordinate Mg(2+): glutamate 415 and glutamate 422.

This sequence belongs to the class-II aminoacyl-tRNA synthetase family. As to quaternary structure, homodimer. Mg(2+) is required as a cofactor.

It localises to the cytoplasm. It carries out the reaction tRNA(Lys) + L-lysine + ATP = L-lysyl-tRNA(Lys) + AMP + diphosphate. The protein is Lysine--tRNA ligase (lysS) of Escherichia coli (strain K12).